The chain runs to 256 residues: Alcohol dehydrogenase (256 aa).

Ser-2 carries the N-acetylserine modification. NAD(+) contacts are provided by residues 12–41 (FVAG…LDRI) and Asp-65. A substrate-binding site is contributed by Ser-140. The active-site Proton acceptor is Tyr-153. Residue Lys-157 coordinates NAD(+).

It belongs to the short-chain dehydrogenases/reductases (SDR) family. In terms of assembly, homodimer.

The catalysed reaction is a primary alcohol + NAD(+) = an aldehyde + NADH + H(+). It carries out the reaction a secondary alcohol + NAD(+) = a ketone + NADH + H(+). Its activity is regulated as follows. Inhibited by 2,2,2-trifluoroethanol and pyrazole. This Drosophila melanogaster (Fruit fly) protein is Alcohol dehydrogenase (Adh).